We begin with the raw amino-acid sequence, 1486 residues long: Chromosome partition protein MukB (1486 aa).

34–41 lines the ATP pocket; sequence GGNGAGKS. Coiled coils occupy residues 326-418, 444-480, and 509-603; these read LEAD…QYNQ, LETFQAKELEATEKMLSLEQKMSMAQTAHSQFEQAYQ, and RHLA…RAPV. Positions 666–783 are flexible hinge; it reads PGGSEDQRLN…EVPLFGRAAR (118 aa). Coiled-coil stretches lie at residues 835–923, 977–1115, and 1209–1266; these read EAEI…AKLE, EMLS…TAKA, and VEAI…QNVS.

The protein belongs to the SMC family. MukB subfamily. As to quaternary structure, homodimerization via its hinge domain. Binds to DNA via its C-terminal region. Interacts, and probably forms a ternary complex, with MukE and MukF via its C-terminal region. The complex formation is stimulated by calcium or magnesium. Interacts with tubulin-related protein FtsZ.

The protein localises to the cytoplasm. It localises to the nucleoid. In terms of biological role, plays a central role in chromosome condensation, segregation and cell cycle progression. Functions as a homodimer, which is essential for chromosome partition. Involved in negative DNA supercoiling in vivo, and by this means organize and compact chromosomes. May achieve or facilitate chromosome segregation by condensation DNA from both sides of a centrally located replisome during cell division. The chain is Chromosome partition protein MukB from Escherichia coli (strain K12 / MC4100 / BW2952).